We begin with the raw amino-acid sequence, 59 residues long: MNFNKLFLIVILAALLLLGQTEAGRSKKLGKKIEKAGKRVFNAAQKGLPVAAGVQALGR.

Positions 1-23 (MNFNKLFLIVILAALLLLGQTEA) are cleaved as a signal peptide. Leu57 carries the leucine amide modification.

It belongs to the cecropin family.

Its subcellular location is the secreted. Cecropins have lytic and antibacterial activity against several Gram-positive and Gram-negative bacteria. The polypeptide is Cecropin-B2 (CECB2) (Culex pipiens pipiens (Northern house mosquito)).